The chain runs to 511 residues: MQSVLVLDFGSQYTQLIARRIRELNIYSEILPYNTPADTIRTHQPKAIILSGGPNSVYDQTAFMPDPAIFSLGIPVLGICYGLQAIAKHFGGVVASSNKHEFGRSKILVEQQGDNPLFQNIPNSDVWMSHGDKVMQLPEGFRATASSDNSEICAFESTGVNSPAHIYGLQFHPEVQHTLYGKEMLGNFLLNIAAITPDWSSKSFIEHQIEEIRRKAGNNTVICGISGGVDSTVAAVLVSKAIGKQLHCVFVDNGLLRKNEAEKVMHFLKPLGLHITLADSSDLFLKRLKGVASPEKKRKIIGRTFIQVFEEQIHHEKFLVQGTLYPDVIESISVKGPSETIKSHHNVGGLPKRMKLKLIEPLRELFKDEVRAVGRELGIPEDILMRHPFPGPGLAVRVLGSLTHERLEILREADEIYIEELQASGLYSKVWQAFAVLLPVQSVGVMGDKRTYENVLALRAVESSDGMTADWAPLPHDFLARVSNRIINEVRGINRVAYDISSKPPATIEWE.

A Glutamine amidotransferase type-1 domain is found at 3-198 (SVLVLDFGSQ…LLNIAAITPD (196 aa)). Residue Cys80 is the Nucleophile of the active site. Residues His172 and Glu174 contribute to the active site. Positions 199–386 (WSSKSFIEHQ…LGIPEDILMR (188 aa)) constitute a GMPS ATP-PPase domain. Position 226-232 (226-232 (SGGVDST)) interacts with ATP.

As to quaternary structure, homodimer.

The catalysed reaction is XMP + L-glutamine + ATP + H2O = GMP + L-glutamate + AMP + diphosphate + 2 H(+). It functions in the pathway purine metabolism; GMP biosynthesis; GMP from XMP (L-Gln route): step 1/1. Catalyzes the synthesis of GMP from XMP. The protein is GMP synthase [glutamine-hydrolyzing] of Chlorobium chlorochromatii (strain CaD3).